We begin with the raw amino-acid sequence, 473 residues long: Photosystem II CP43 reaction center protein (473 aa).

The propeptide occupies 1–14; the sequence is MKILYSLRRFYHVE. An N-acetylthreonine modification is found at T15. T15 is subject to Phosphothreonine. 5 consecutive transmembrane segments (helical) span residues 69–93, 134–155, 178–200, 255–275, and 291–312; these read LFEVAHFVPEKPMYEQGLILLPHLA, LLGPETLEESFPFFGYVWKDRN, KALYFGGVYDTWAPGGGDVRKIT, KPFAWARRAFVWSGEAYLSYS, and WFNNTAYSSEFYGPTGPEASQA. Residue E367 coordinates [CaMn4O5] cluster. Residues 447–471 traverse the membrane as a helical segment; sequence RARAAAAGFEKGIDRDLEPVLYMNP.

Belongs to the PsbB/PsbC family. PsbC subfamily. As to quaternary structure, PSII is composed of 1 copy each of membrane proteins PsbA, PsbB, PsbC, PsbD, PsbE, PsbF, PsbH, PsbI, PsbJ, PsbK, PsbL, PsbM, PsbT, PsbX, PsbY, PsbZ, Psb30/Ycf12, at least 3 peripheral proteins of the oxygen-evolving complex and a large number of cofactors. It forms dimeric complexes. Requires Binds multiple chlorophylls and provides some of the ligands for the Ca-4Mn-5O cluster of the oxygen-evolving complex. It may also provide a ligand for a Cl- that is required for oxygen evolution. PSII binds additional chlorophylls, carotenoids and specific lipids. as cofactor. Post-translationally, phosphorylated on threonine residue(s); phosphorylation increases with increasing light levels.

Its subcellular location is the plastid. The protein localises to the chloroplast thylakoid membrane. In terms of biological role, one of the components of the core complex of photosystem II (PSII). It binds chlorophyll and helps catalyze the primary light-induced photochemical processes of PSII. PSII is a light-driven water:plastoquinone oxidoreductase, using light energy to abstract electrons from H(2)O, generating O(2) and a proton gradient subsequently used for ATP formation. This chain is Photosystem II CP43 reaction center protein, found in Secale cereale (Rye).